Here is a 567-residue protein sequence, read N- to C-terminus: uncharacterized protein (567 aa).

This sequence belongs to the protein kinase superfamily. ADCK protein kinase family.

This is an uncharacterized protein from Synechocystis sp. (strain ATCC 27184 / PCC 6803 / Kazusa).